We begin with the raw amino-acid sequence, 244 residues long: MAQWWQILLGLWAVLPTLAGDKLLSVCMNSKRHKQEPGPEDELYQECRPWEDNACCTRSTSWEAHLEEPLLFNFSMMHCGLLTPACRKHFIQAICFHECSPNLGPWIQPVVPNGQEEQRVWGVPLCQEDCEDWWRACHSSLTCKSNWLHGWDWSEEKKHCPAHEPCLPFSYHFPTPDDLCEKIWNNTFKASPERRNSGRCLQKWFEPTLSNPNVEVALHFAGSALAPQLSYTLPAFSLCLLFHP.

The signal sequence occupies residues 1 to 19; it reads MAQWWQILLGLWAVLPTLA. Disulfide bonds link Cys27-Cys55, Cys47-Cys95, Cys56-Cys99, Cys79-Cys166, Cys86-Cys137, Cys126-Cys200, Cys130-Cys180, and Cys143-Cys160. The tract at residues 62–81 is important for interaction with IZUMO1; sequence WEAHLEEPLLFNFSMMHCGL. Asn73 carries an N-linked (GlcNAc...) asparagine glycan. N-linked (GlcNAc...) asparagine glycosylation occurs at Asn185. Gly222 carries GPI-anchor amidated glycine lipidation. Positions 223–244 are excised as a propeptide; sequence SALAPQLSYTLPAFSLCLLFHP.

Belongs to the folate receptor family. In terms of assembly, monomer. Interacts with IZUMO1; the interaction is direct. IZUMO1 and IZUMO1R/JUNO form a complex with 1:1 stoichiometry. Interacts with WDR54. In terms of processing, the protein is rapidly cleaved following fertilization, being only weakly detectable in zona-intact fertilized eggs at telophase II and undetectable at the pronuclear stage. Sheding is probably required to block to polyspermy and ensuring egg fusion with a single sperm. In terms of tissue distribution, widely expressed with higher expression in thymus, spleen and lung. Present at the cell surface of unfertilized oocytes, while it is barely detectable 30 to 40 minutes after fertilization (at protein level).

It localises to the cell membrane. Receptor for IZUMO1 present at the cell surface of oocytes (oolemma), which is essential for species-specific gamete recognition and fertilization. The IZUMO1:IZUMO1R/JUNO interaction is a necessary adhesion event between sperm and egg that is required for fertilization but is not sufficient for cell fusion. The ligand-receptor interaction probably does not act as a membrane 'fusogen'. Does not bind folate. This Mus musculus (Mouse) protein is Sperm-egg fusion protein Juno.